We begin with the raw amino-acid sequence, 590 residues long: Synaptotagmin-3 (590 aa).

The Vesicular portion of the chain corresponds to 1–54; it reads MSGDYEDDLCRRALILVSDLCARVRDADTNDRCQEFNDRIRGYPRGPDADISVS. Residues 10–34 form a cysteine motif region; the sequence is CRRALILVSDLCARVRDADTNDRCQ. A helical transmembrane segment spans residues 55 to 75; that stretch reads LLSVIVTFCGIVLLGVSLFVS. Over 76–590 the chain is Cytoplasmic; that stretch reads WKLCWVPWRD…KGLSEKENSE (515 aa). Disordered stretches follow at residues 143–220, 234–260, and 273–295; these read AELL…VTSL, TQQTLTSQPDPSSEERPPALPLPLPGG, and ELYQGTGPGGRRSGGGPGSGEAG. The segment covering 185 to 203 has biased composition (low complexity); the sequence is SPELPSEGGAGSGLLLLPP. Polar residues predominate over residues 234 to 243; that stretch reads TQQTLTSQPD. Over residues 278–295 the composition is skewed to gly residues; it reads TGPGGRRSGGGPGSGEAG. Residue Arg284 is modified to Omega-N-methylarginine. C2 domains are found at residues 299–420 and 431–565; these read PCGR…PLWR and DLGE…EHWH. Ca(2+) is bound by residues Asp330, Asp336, Asp388, Phe389, Asp390, Ser393, Asp396, Asp462, Asp468, Asp522, and Asp524.

Belongs to the synaptotagmin family. In terms of assembly, homodimer; disulfide-linked via the cysteine motif. Can also form heterodimers with SYT6, SYT9 and SYT10. Ca(2+) serves as cofactor. In terms of tissue distribution, expressed in melanocytes.

Its subcellular location is the cell membrane. It is found in the cytoplasmic vesicle. The protein resides in the secretory vesicle membrane. In terms of biological role, ca(2+) sensor involved in Ca(2+)-dependent exocytosis of secretory vesicles through Ca(2+) and phospholipid binding to the C2 domain. Ca(2+) induces binding of the C2-domains to phospholipid membranes and to assembled SNARE-complexes; both actions contribute to triggering exocytosis. Plays a role in dendrite formation by melanocytes. This is Synaptotagmin-3 (SYT3) from Homo sapiens (Human).